Reading from the N-terminus, the 164-residue chain is ATP synthase subunit b (164 aa).

A helical transmembrane segment spans residues 7-25 (SFWLAVSFIIFVYLIYRPA).

The protein belongs to the ATPase B chain family. In terms of assembly, F-type ATPases have 2 components, F(1) - the catalytic core - and F(0) - the membrane proton channel. F(1) has five subunits: alpha(3), beta(3), gamma(1), delta(1), epsilon(1). F(0) has three main subunits: a(1), b(2) and c(10-14). The alpha and beta chains form an alternating ring which encloses part of the gamma chain. F(1) is attached to F(0) by a central stalk formed by the gamma and epsilon chains, while a peripheral stalk is formed by the delta and b chains.

It localises to the cell inner membrane. Its function is as follows. F(1)F(0) ATP synthase produces ATP from ADP in the presence of a proton or sodium gradient. F-type ATPases consist of two structural domains, F(1) containing the extramembraneous catalytic core and F(0) containing the membrane proton channel, linked together by a central stalk and a peripheral stalk. During catalysis, ATP synthesis in the catalytic domain of F(1) is coupled via a rotary mechanism of the central stalk subunits to proton translocation. Component of the F(0) channel, it forms part of the peripheral stalk, linking F(1) to F(0). The polypeptide is ATP synthase subunit b (Rickettsia felis (strain ATCC VR-1525 / URRWXCal2) (Rickettsia azadi)).